We begin with the raw amino-acid sequence, 4650 residues long: Nonribosomal peptide synthetase lenA (4650 aa).

An adenylation 1 region spans residues 227 to 628; it reads GSILDTIRAK…DGSVIHVGRK (402 aa). One can recognise a Carrier 1 domain in the interval 773-849; sequence PPETVLEKAL…KLAQYLRNTE (77 aa). Position 810 is an O-(pantetheine 4'-phosphoryl)serine (Ser-810). Residues 890 to 1212 form a condensation 1 region; sequence EDCYPCTALQ…CDFQSQLIFQ (323 aa). Positions 1288–1622 are adenylation 2; it reads ELELNAQKEP…RKIRPGYLGR (335 aa). In terms of domain architecture, Carrier 2 spans 1745 to 1822; that stretch reads PPVSAAEKKW…EIAALSETRD (78 aa). Ser-1782 bears the O-(pantetheine 4'-phosphoryl)serine mark. Positions 1850 to 2110 are condensation 2; it reads ATNLIAATVH…GEKTRPGGGA (261 aa). The tract at residues 2183–2511 is adenylation 3; it reads RCVHDLVHDA…RTGDLIKLRG (329 aa). The region spanning 2630 to 2708 is the Carrier 3 domain; sequence APQNRLQHDI…EADVGLDHAS (79 aa). Ser-2667 carries the O-(pantetheine 4'-phosphoryl)serine modification. The segment at 2722–2998 is epimerase; that stretch reads ESMARALAVI…KDARRRSPAN (277 aa). The interval 3128–3565 is condensation 3; the sequence is VQDVYPCTPI…VDDSQRQQIL (438 aa). Residues 3578 to 3980 are adenylation 4; sequence CVHHIIHQRC…FVGRKDNQIK (403 aa). The 77-residue stretch at 4114–4190 folds into the Carrier 4 domain; that stretch reads TPSTPLEAQL…QLAAVLEEGA (77 aa). Ser-4151 is modified (O-(pantetheine 4'-phosphoryl)serine). Positions 4249 to 4648 are condensation 4; sequence HMVLTFSQPV…TTTPEKLVAE (400 aa).

The protein belongs to the NRP synthetase family. It depends on pantetheine 4'-phosphate as a cofactor.

It functions in the pathway alkaloid biosynthesis. Nonribosomal peptide synthetase; part of the gene cluster that mediates the biosynthesis of the ergot alkaloids lentopeptins A and B. Within the pathway, lenA catalyzes the biosynthesis of the Ala-Val-Ala peptide chain, including a cinnamic acid moiety as the starting unit. The release of the peptide from the enzyme is accomplished via a cyclization reaction catalyzed by the terminal condensation-like (Ct) domain of lenA to form the N-acyldiketopiperazine intermediate. The reaction appears to proceed through a nucleophilic attack on the carbonyl carbon by a lone electron pair of the valine amide nitrogen. The phenylalanine ammonia-lyase lenB provides the starter unit for the synthesis of the N-acyldiketopiperazine intermediate by the NRPS lenA, while the cytochrome P450 monooxygenase lenC is involved in the post-NRPS oxidative modification steps to form lentopeptins A and B. This chain is Nonribosomal peptide synthetase lenA, found in Aspergillus lentulus.